Reading from the N-terminus, the 478-residue chain is 3-ketoacyl-CoA synthase 3 (478 aa).

The N-terminal stretch at 1-25 (MDLLVMLLSLLVSYLIFKIWKRIDS) is a signal peptide. Positions 26-313 (KRDQNCYILD…FMLCLLLKKL (288 aa)) constitute an FAE domain. Active-site residues include C168, H247, H345, H349, H378, and N382.

It belongs to the thiolase-like superfamily. Chalcone/stilbene synthases family. Expressed in siliques, leaves, stems and seedlings.

Its subcellular location is the endoplasmic reticulum. It catalyses the reaction a very-long-chain acyl-CoA + malonyl-CoA + H(+) = a very-long-chain 3-oxoacyl-CoA + CO2 + CoA. Its pathway is lipid metabolism; fatty acid biosynthesis. The chain is 3-ketoacyl-CoA synthase 3 from Arabidopsis thaliana (Mouse-ear cress).